Here is an 867-residue protein sequence, read N- to C-terminus: cGMP-dependent 3',5'-cGMP phosphodiesterase A (867 aa).

Over residues 121–146 the composition is skewed to low complexity; it reads IINSSSSTTDTSKTSPIKKQTSSSSP. 2 disordered regions span residues 121–167 and 180–241; these read IINS…SQQQ and HHHH…STFP. The segment covering 147–160 has biased composition (pro residues); it reads PLSPQQQQPPPPLV. Low complexity predominate over residues 191-220; that stretch reads NDNNNNTTTNNNNIEILEQQQQQQQQQQQQ. The segment covering 221-232 has biased composition (acidic residues); sequence QDEDSTDVDEEF. A phosphodiesterase activity region spans residues 357 to 503; it reads STTGFVLWIN…GDTCYDPNRI (147 aa). A divalent metal cation is bound by residues His399, His401, and Asp403. Residues 607 to 721 and 734 to 851 contribute to the a nucleoside 3',5'-cyclic phosphate site; these read IFRS…WEMR and VFSR…IFVD.

Belongs to the metallo-beta-lactamase superfamily. cNMP phosphodiesterase family. Mn(2+) serves as cofactor. It depends on Mg(2+) as a cofactor. Zn(2+) is required as a cofactor.

Its subcellular location is the cytoplasm. It localises to the cytosol. It catalyses the reaction 3',5'-cyclic GMP + H2O = GMP + H(+). Phosphodiesterase specific for cGMP, which is activated by cGMP but not by cAMP. Involved in the degradation of intracellular cGMP, contributes to the control of cGMP signals. The chain is cGMP-dependent 3',5'-cGMP phosphodiesterase A (pdeD) from Dictyostelium discoideum (Social amoeba).